Here is a 1522-residue protein sequence, read N- to C-terminus: Lysophospholipase NTE1 (1522 aa).

Over 1–73 the chain is Lumenal; sequence MVDGTYVNSS…SLLVYLINGT (73 aa). The helical transmembrane segment at 74–94 threads the bilayer; sequence VPFYLVVLGSVFTPIIVYLIL. Residues 95–1522 lie on the Cytoplasmic side of the membrane; that stretch reads RSRVLSAYSR…IHLLHRRNSI (1428 aa). 3 disordered regions span residues 443 to 468, 485 to 523, and 535 to 556; these read SVQE…TPNK, DLLS…ASSP, and SQNF…PSVV. 2 stretches are compositionally biased toward low complexity: residues 498–511 and 540–555; these read KTAS…PRIS and PLSS…KPSV. Residues 661–782 and 778–918 contribute to the a nucleoside 3',5'-cyclic phosphate site; these read PINV…LTKL and TLTK…VAHK. Disordered stretches follow at residues 828-852 and 1125-1145; these read QKSK…DNQP and SSQN…GAPP. The region spanning 1219–1383 is the PNPLA domain; it reads LVLGGGGARG…LDNLPVLEMK (165 aa). A GXGXXG motif is present at residues 1223-1228; the sequence is GGGARG. Positions 1250–1254 match the GXSXG motif; sequence GTSIG. Residue Ser-1252 is the Nucleophile of the active site. Asp-1370 (proton acceptor) is an active-site residue. The DGA/G motif lies at 1370–1372; that stretch reads DGG.

This sequence belongs to the NTE family.

The protein resides in the endoplasmic reticulum membrane. It carries out the reaction a 1-acyl-sn-glycero-3-phosphocholine + H2O = sn-glycerol 3-phosphocholine + a fatty acid + H(+). Its activity is regulated as follows. Inhibited by organophosphorus esters. Intracellular phospholipase B that catalyzes the double deacylation of phosphatidylcholine (PC) to glycerophosphocholine (GroPCho). Plays an important role in membrane lipid homeostasis. Responsible for the rapid PC turnover in response to inositol, elevated temperatures, or when choline is present in the growth medium. This Eremothecium gossypii (strain ATCC 10895 / CBS 109.51 / FGSC 9923 / NRRL Y-1056) (Yeast) protein is Lysophospholipase NTE1 (NTE1).